The chain runs to 608 residues: UvrABC system protein C (608 aa).

In terms of domain architecture, GIY-YIG spans 18-96 (NQPGVYRMYN…IKKYKPRYNV (79 aa)). The UVR domain maps to 206-241 (KQVIDSLVQHMERASTDLRFEAAARYRDQISALNKV).

This sequence belongs to the UvrC family. In terms of assembly, interacts with UvrB in an incision complex.

It localises to the cytoplasm. Its function is as follows. The UvrABC repair system catalyzes the recognition and processing of DNA lesions. UvrC both incises the 5' and 3' sides of the lesion. The N-terminal half is responsible for the 3' incision and the C-terminal half is responsible for the 5' incision. The protein is UvrABC system protein C of Pseudoalteromonas atlantica (strain T6c / ATCC BAA-1087).